Here is a 182-residue protein sequence, read N- to C-terminus: Ribulose bisphosphate carboxylase small subunit, chloroplastic 5 (182 aa).

A chloroplast-targeting transit peptide spans Met1–Val49.

This sequence belongs to the RuBisCO small chain family. As to quaternary structure, heterohexadecamer of 8 large and 8 small subunits.

The protein resides in the plastid. Its subcellular location is the chloroplast. Its function is as follows. RuBisCO catalyzes two reactions: the carboxylation of D-ribulose 1,5-bisphosphate, the primary event in carbon dioxide fixation, as well as the oxidative fragmentation of the pentose substrate. Both reactions occur simultaneously and in competition at the same active site. Although the small subunit is not catalytic it is essential for maximal activity. The protein is Ribulose bisphosphate carboxylase small subunit, chloroplastic 5 of Mesembryanthemum crystallinum (Common ice plant).